The following is a 268-amino-acid chain: Putative pyruvate, phosphate dikinase regulatory protein (268 aa).

Gly-147–Thr-154 is a binding site for ADP.

Belongs to the pyruvate, phosphate/water dikinase regulatory protein family. PDRP subfamily.

It catalyses the reaction N(tele)-phospho-L-histidyl/L-threonyl-[pyruvate, phosphate dikinase] + ADP = N(tele)-phospho-L-histidyl/O-phospho-L-threonyl-[pyruvate, phosphate dikinase] + AMP + H(+). The enzyme catalyses N(tele)-phospho-L-histidyl/O-phospho-L-threonyl-[pyruvate, phosphate dikinase] + phosphate + H(+) = N(tele)-phospho-L-histidyl/L-threonyl-[pyruvate, phosphate dikinase] + diphosphate. Its function is as follows. Bifunctional serine/threonine kinase and phosphorylase involved in the regulation of the pyruvate, phosphate dikinase (PPDK) by catalyzing its phosphorylation/dephosphorylation. The chain is Putative pyruvate, phosphate dikinase regulatory protein from Clostridium beijerinckii (strain ATCC 51743 / NCIMB 8052) (Clostridium acetobutylicum).